The following is a 351-amino-acid chain: Prostaglandin reductase 2 (351 aa).

99-100 lines the substrate pocket; it reads FY. Residues 165-168, K192, Y208, N231, 253-259, 287-289, and N337 contribute to the NADP(+) site; these read GACG, CGQISQY, and FTV. Residue 288-290 participates in substrate binding; that stretch reads TVL.

The protein belongs to the NADP-dependent oxidoreductase L4BD family. In terms of assembly, monomer. In terms of tissue distribution, widely expressed with highest levels in adipose tissues.

It is found in the cytoplasm. It catalyses the reaction 13,14-dihydro-15-oxo-prostaglandin E2 + NAD(+) = 15-oxoprostaglandin E2 + NADH + H(+). The enzyme catalyses 13,14-dihydro-15-oxo-prostaglandin E2 + NADP(+) = 15-oxoprostaglandin E2 + NADPH + H(+). The catalysed reaction is 13,14-dihydro-15-oxo-PGF2alpha + NADP(+) = 15-oxoprostaglandin F2alpha + NADPH + H(+). It carries out the reaction 13,14-dihydro-15-oxo-prostaglandin E1 + NADP(+) = 15-oxoprostaglandin E1 + NADPH + H(+). It catalyses the reaction 13,14-dihydro-15-oxo-prostaglandin F1alpha + NADP(+) = 15-oxoprostaglandin F1alpha + NADPH + H(+). In terms of biological role, functions as 15-oxo-prostaglandin 13-reductase and acts on 15-keto-PGE1, 15-keto-PGE2, 15-keto-PGE1-alpha and 15-keto-PGE2-alpha with highest activity towards 15-keto-PGE2. Overexpression represses transcriptional activity of PPARG and inhibits adipocyte differentiation. This is Prostaglandin reductase 2 from Mus musculus (Mouse).